The sequence spans 2663 residues: Ankyrin repeat domain-containing protein 11 (2663 aa).

2 disordered regions span residues 1-90 (MPKG…KEPV) and 128-169 (SANS…ERGE). Basic and acidic residues-rich tracts occupy residues 21–54 (MVEK…VRER) and 69–90 (EQKD…KEPV). Residues 128–155 (SANSPVDTTPKHPSQSTVCQKGTPNSAS) show a composition bias toward polar residues. A compositionally biased stretch (basic and acidic residues) spans 156 to 169 (KTKDKVNKRNERGE). 4 ANK repeats span residues 167–196 (RGET…DVNV), 200–229 (AGWT…EVNT), 233–262 (DDDT…NPQQ), and 266–292 (KGET…YTSS). A Phosphoserine modification is found at serine 276. 3 disordered regions span residues 289–380 (YTSS…SNSF), 398–647 (APKK…GQCS), and 723–783 (DTNK…NDLK). A compositionally biased stretch (acidic residues) spans 295–305 (SSTESSEEEDA). Polar residues predominate over residues 309-320 (APSSSVDGNNTD). Residues 356-376 (DRVPPVDDKHLLKKDYRKETK) are compositionally biased toward basic and acidic residues. The residue at position 408 (serine 408) is a Phosphoserine. Phosphothreonine is present on threonine 410. Position 411 is a phosphoserine (serine 411). Positions 438-451 (KTREPSNAKQQKEK) are enriched in basic and acidic residues. Over residues 452-462 (NKVKKKRKKET) the composition is skewed to basic residues. The span at 463–477 (KGREVRFGKRSDKFC) shows a compositional bias: basic and acidic residues. The segment covering 481-493 (SESESSESGEDDR) has biased composition (acidic residues). Low complexity predominate over residues 513–531 (SLFSSLSASSTSSHGSSAA). Over residues 539 to 550 (TDQHTKHWRTDN) the composition is skewed to basic and acidic residues. Residues 551 to 562 (WKTISSPAWSEV) are compositionally biased toward polar residues. Positions 576–588 (ESDYSSEGSSVES) are enriched in low complexity. Composition is skewed to basic residues over residues 591–602 (PVRKRQEHRKRA) and 629–641 (VKKH…HKNK). Serine 834 is modified (phosphoserine). Composition is skewed to basic and acidic residues over residues 881–928 (VKED…EKHK), 935–1043 (SEKD…KSIL), 1059–1090 (KKDT…KEKA), and 1099–1112 (FSEK…KEKS). Disordered regions lie at residues 881-1043 (VKED…KSIL) and 1059-1393 (KKDT…GQYE). Position 1079 is a phosphoserine (serine 1079). Residue threonine 1120 is modified to Phosphothreonine. The residue at position 1123 (serine 1123) is a Phosphoserine. Basic and acidic residues-rich tracts occupy residues 1142 to 1301 (DLPR…DKIS), 1330 to 1347 (GDDK…LKEK), and 1359 to 1393 (KSHD…GQYE). Phosphothreonine is present on threonine 1419. Basic and acidic residues-rich tracts occupy residues 1424-1446 (STEK…KELK), 1466-1545 (REKW…KGDP), 1556-1574 (APSK…KLLG), 1587-1597 (LSQKDLEIEER), and 1605-1639 (MKQM…DIPA). A disordered region spans residues 1424 to 1710 (STEKKDKNDS…TGVPTPTSVL (287 aa)). Residue serine 1509 is modified to Phosphoserine. Position 1692 is a phosphoserine (serine 1692). Residues 1698 to 1710 (SRPTGVPTPTSVL) show a composition bias toward polar residues. Phosphoserine is present on serine 1792. Residues 1814-1836 (SVPAASSYDSPMPPSMEDRAPLP) are disordered. Serine 1847 is modified (phosphoserine). A phosphotyrosine mark is found at tyrosine 1850 and tyrosine 1851. Phosphoserine occurs at positions 1852, 1859, and 1990. Disordered regions lie at residues 1988 to 2019 (PESP…PAPP) and 2131 to 2406 (LDLG…STQQ). 2 stretches are compositionally biased toward low complexity: residues 2310-2324 (IQPE…AEAP) and 2391-2406 (RSTQ…STQQ). The tract at residues 2369–2663 (AKARGSEDDD…VNDDFVLLPA (295 aa)) is important for protein degradation.

As to quaternary structure, interacts with the PAS region of the p160 coactivators. In terms of processing, subject to proteasomal degradation which is probably essential to regulate its activity.

Its subcellular location is the nucleus. Its function is as follows. Chromatin regulator which modulates histone acetylation and gene expression in neural precursor cells. May recruit histone deacetylases (HDACs) to the p160 coactivators/nuclear receptor complex to inhibit ligand-dependent transactivation. Has a role in proliferation and development of cortical neural precursors. May also regulate bone homeostasis. This chain is Ankyrin repeat domain-containing protein 11 (ANKRD11), found in Homo sapiens (Human).